We begin with the raw amino-acid sequence, 253 residues long: Ipsdienol dehydrogenase (253 aa).

NAD(+) contacts are provided by residues 12-40 (VTGGGSGLGEATAKLLLTEGARVTIFSRN) and D63. S149 contributes to the substrate binding site. Y162 serves as the catalytic Proton acceptor. NAD(+) is bound at residue K166.

This sequence belongs to the short-chain dehydrogenases/reductases (SDR) family. In terms of tissue distribution, specifically expressed in male midguts. Expressed at higher level in the anterior midgut of fed males.

The protein localises to the cytoplasm. Its subcellular location is the cytosol. The enzyme catalyses (4R)-ipsdienol + NADP(+) = ipsdienone + NADPH + H(+). The catalysed reaction is (4R)-ipsdienol + NAD(+) = ipsdienone + NADH + H(+). Its function is as follows. Catalyzes the oxidation of racemic ipsdienol and (4R)-(-)-ipsdienol to form ipsdienone (2-methyl-6-methylene-2,7-octadien-4-one), an intermediate in the biosynthesis of pheromonal ipsdienol in male pine engraver beetles. In contrast, (4S)-(+)-ipsdienol is not a substrate. The chain is Ipsdienol dehydrogenase from Ips pini (Pine engraver beetle).